The chain runs to 154 residues: IQ domain-containing protein F3 (154 aa).

The 30-residue stretch at 89–118 (QEQATVKLQSCIRMWQCRQCYRQMCNALCL) folds into the IQ domain.

In Homo sapiens (Human), this protein is IQ domain-containing protein F3 (IQCF3).